The sequence spans 524 residues: DNA damage-binding protein CMR1 (524 aa).

A disordered region spans residues 35–79 (EKIIPKPAPPKPKRASAPRAKREPVKRETARPTRQSSRLAGLDAD). Positions 54–65 (AKREPVKRETAR) are enriched in basic and acidic residues. 7 WD repeats span residues 184-225 (LVPQ…VKAE), 245-285 (THSR…STEA), 295-332 (LPIS…STAE), 336-376 (LTDQ…GKGD), 385-425 (THDS…KWTA), 447-490 (GRWV…LAQL), and 493-524 (DGIT…CLWM).

It belongs to the WD repeat DDB2/WDR76 family.

Functionally, DNA-binding protein that binds to both single- and double-stranded DNA. Binds preferentially to UV-damaged DNA. May be involved in DNA-metabolic processes. This is DNA damage-binding protein CMR1 from Chaetomium globosum (strain ATCC 6205 / CBS 148.51 / DSM 1962 / NBRC 6347 / NRRL 1970) (Soil fungus).